The sequence spans 240 residues: UDP-2,3-diacylglucosamine hydrolase (240 aa).

The Mn(2+) site is built by D8, H10, D41, N79, and H114. A substrate-binding site is contributed by 79-80 (NR). Residues D122, S160, N164, K167, and H195 each coordinate substrate. H195 and H197 together coordinate Mn(2+).

The protein belongs to the LpxH family. Mn(2+) serves as cofactor.

The protein resides in the cell inner membrane. It carries out the reaction UDP-2-N,3-O-bis[(3R)-3-hydroxytetradecanoyl]-alpha-D-glucosamine + H2O = 2-N,3-O-bis[(3R)-3-hydroxytetradecanoyl]-alpha-D-glucosaminyl 1-phosphate + UMP + 2 H(+). It functions in the pathway glycolipid biosynthesis; lipid IV(A) biosynthesis; lipid IV(A) from (3R)-3-hydroxytetradecanoyl-[acyl-carrier-protein] and UDP-N-acetyl-alpha-D-glucosamine: step 4/6. Its function is as follows. Hydrolyzes the pyrophosphate bond of UDP-2,3-diacylglucosamine to yield 2,3-diacylglucosamine 1-phosphate (lipid X) and UMP by catalyzing the attack of water at the alpha-P atom. Involved in the biosynthesis of lipid A, a phosphorylated glycolipid that anchors the lipopolysaccharide to the outer membrane of the cell. The protein is UDP-2,3-diacylglucosamine hydrolase of Cellvibrio japonicus (strain Ueda107) (Pseudomonas fluorescens subsp. cellulosa).